The chain runs to 547 residues: MFS-type transporter M6 (547 aa).

The disordered stretch occupies residues 1 to 45 (MHRRRRDNLMTPAEMVASMKPPQSLSTEDDDGSRRDSESSADVLK). A helical transmembrane segment spans residues 81 to 101 (VLVVASFAAAISPFSTSTYYP). Asparagine 118 carries an N-linked (GlcNAc...) asparagine glycan. A helical transmembrane segment spans residues 146–166 (PMFLVCFAIYFVANVGLALQN). The N-linked (GlcNAc...) asparagine glycan is linked to asparagine 167. 2 helical membrane-spanning segments follow: residues 206 to 226 (LIYA…IGGL) and 236 to 256 (VFWF…IFFG). An N-linked (GlcNAc...) asparagine glycan is attached at asparagine 274. 5 consecutive transmembrane segments (helical) span residues 317–337 (FILS…TSVL), 347–367 (YDAV…LLAY), 407–427 (LGFV…YGWQ), 432–452 (APLA…TGVM), and 469–489 (AVGA…VAVV). The N-linked (GlcNAc...) asparagine glycan is linked to asparagine 493. Residues 496–516 (AGIGWTATVTAGLWVLMMPTL) form a helical membrane-spanning segment.

The protein belongs to the major facilitator superfamily. CAR1 family.

It localises to the membrane. Functionally, MFS-type transporter; part of the gene cluster that mediates the biosynthesis of squalestatin S1 (SQS1, also known as zaragozic acid A), a heavily oxidized fungal polyketide that offers potent cholesterol lowering activity by targeting squalene synthase (SS). The chain is MFS-type transporter M6 from Phoma sp. (strain ATCC 20986 / MF5453).